The primary structure comprises 303 residues: UDP-3-O-acyl-N-acetylglucosamine deacetylase (303 aa).

Positions 78, 237, and 241 each coordinate Zn(2+). Histidine 264 functions as the Proton donor in the catalytic mechanism.

The protein belongs to the LpxC family. Zn(2+) serves as cofactor.

The enzyme catalyses a UDP-3-O-[(3R)-3-hydroxyacyl]-N-acetyl-alpha-D-glucosamine + H2O = a UDP-3-O-[(3R)-3-hydroxyacyl]-alpha-D-glucosamine + acetate. The protein operates within glycolipid biosynthesis; lipid IV(A) biosynthesis; lipid IV(A) from (3R)-3-hydroxytetradecanoyl-[acyl-carrier-protein] and UDP-N-acetyl-alpha-D-glucosamine: step 2/6. Its function is as follows. Catalyzes the hydrolysis of UDP-3-O-myristoyl-N-acetylglucosamine to form UDP-3-O-myristoylglucosamine and acetate, the committed step in lipid A biosynthesis. This chain is UDP-3-O-acyl-N-acetylglucosamine deacetylase, found in Pseudomonas syringae pv. tomato (strain ATCC BAA-871 / DC3000).